A 311-amino-acid polypeptide reads, in one-letter code: UPF0324 membrane protein VV1_3166 (311 aa).

The next 10 membrane-spanning stretches (helical) occupy residues 8–28 (FIFALLLCLSPWVSSPTALVL), 51–71 (LLSYSIIGLGFGIQFQQAIAV), 74–94 (DGIGLIVVTIAGTLLLGFLVA), 106–126 (LISAGTAICGGSAIAAVAPAI), 133–153 (IALALATVFVLNSLALFIFPV), 165–185 (FGTWAAIAIHDTSSVVGAASA), 197–217 (LKLARALWIIPVALLSAILFA), 228–248 (LVLPYFIFWYCAAIAFSDLFP), 256–276 (GIFSVAKQALVVCLFLIGCSI), and 289–309 (LIFGLSLWVVISTTSLSWLLL).

Belongs to the UPF0324 family.

The protein localises to the cell membrane. The polypeptide is UPF0324 membrane protein VV1_3166 (Vibrio vulnificus (strain CMCP6)).